A 412-amino-acid polypeptide reads, in one-letter code: UPF0761 membrane protein LPC_2650 (412 aa).

The next 6 helical transmembrane spans lie at 36–56, 99–119, 137–157, 177–197, 210–230, and 241–261; these read ALAF…LAIF, LSIW…FTIE, AFLL…LSLA, ILHY…YVVV, GGLV…YYLI, and AFAT…ITLL.

Belongs to the UPF0761 family.

It is found in the cell inner membrane. This is UPF0761 membrane protein LPC_2650 from Legionella pneumophila (strain Corby).